The chain runs to 543 residues: Aluminum-activated malate transporter 14 (543 aa).

The next 6 membrane-spanning stretches (helical) occupy residues 56–76 (VGVS…FKGI), 80–100 (AIWA…ATLC), 106–126 (GLGT…ANDS), 129–149 (IFRA…ITYL), 164–184 (LIFL…DTVI), and 191–211 (FYTI…VFPI). Positions 416–438 (DTNEAASYQNTGTPRGERMSRFG) are disordered. Residues 419–428 (EAASYQNTGT) are compositionally biased toward polar residues. Positions 445–472 (RLRADTLERRSAAATNERKILRQQLSRI) form a coiled coil.

Belongs to the aromatic acid exporter (TC 2.A.85) family.

It localises to the membrane. Its function is as follows. Malate transporter. The protein is Aluminum-activated malate transporter 14 (ALMT14) of Arabidopsis thaliana (Mouse-ear cress).